The sequence spans 496 residues: Hexokinase-2 (496 aa).

A helical transmembrane segment spans residues 4–24 (ATVGAVVVGTAAAVAVAALIM). The region spanning 35 to 487 (ARARAILKEF…SGIGAALLAA (453 aa)) is the Hexokinase domain. Residues 90-228 (TGDEGGVFYA…EIDMRVSALV (139 aa)) are hexokinase small subdomain. ADP contacts are provided by G104, T105, and N106. 4 residues coordinate D-glucose: T194, K195, N229, and D230. Positions 229 to 476 (NDTVGTLAGG…TSIVFKHAND (248 aa)) are hexokinase large subdomain. T253 contributes to the ADP binding site. D-glucose-binding residues include N256, E284, and E315. G441 is an ADP binding site.

Belongs to the hexokinase family.

It is found in the plastid. The protein resides in the chloroplast outer membrane. It carries out the reaction a D-hexose + ATP = a D-hexose 6-phosphate + ADP + H(+). The catalysed reaction is D-fructose + ATP = D-fructose 6-phosphate + ADP + H(+). The enzyme catalyses D-glucose + ATP = D-glucose 6-phosphate + ADP + H(+). It participates in carbohydrate metabolism; hexose metabolism. It functions in the pathway carbohydrate degradation; glycolysis; D-glyceraldehyde 3-phosphate and glycerone phosphate from D-glucose: step 1/4. In terms of biological role, fructose and glucose phosphorylating enzyme. May be involved in the phosphorylation of glucose during the export from plastids to cytosol. Seems neither to be involved in cell sugar sensing nor in carbohydrate metabolism in tuber. This is Hexokinase-2 (HXK2) from Solanum tuberosum (Potato).